Reading from the N-terminus, the 102-residue chain is MPKQKIRIRLKAFDHAILDQSAQKIVETAKRTGAEVSGPIPLPTKREVITILRAPHKYKDSREQFEIKTHKRLIDILNPTPKTVDALMKLDLPSGVDIEIKL.

It belongs to the universal ribosomal protein uS10 family. In terms of assembly, part of the 30S ribosomal subunit.

Involved in the binding of tRNA to the ribosomes. This is Small ribosomal subunit protein uS10 from Caldanaerobacter subterraneus subsp. tengcongensis (strain DSM 15242 / JCM 11007 / NBRC 100824 / MB4) (Thermoanaerobacter tengcongensis).